The primary structure comprises 245 residues: Sugar fermentation stimulation protein homolog (245 aa).

This sequence belongs to the SfsA family.

The chain is Sugar fermentation stimulation protein homolog from Yersinia pseudotuberculosis serotype I (strain IP32953).